A 127-amino-acid polypeptide reads, in one-letter code: uncharacterized protein (127 aa).

A compositionally biased stretch (polar residues) spans 1–17 (MQGSVQIQKGNISSSYT). A disordered region spans residues 1–36 (MQGSVQIQKGNISSSYTPEKHPSHPTSANGSMSPKR).

This is an uncharacterized protein from Treponema pallidum (strain Nichols).